Here is an 80-residue protein sequence, read N- to C-terminus: Exodeoxyribonuclease 7 small subunit (80 aa).

This sequence belongs to the XseB family. In terms of assembly, heterooligomer composed of large and small subunits.

It is found in the cytoplasm. The enzyme catalyses Exonucleolytic cleavage in either 5'- to 3'- or 3'- to 5'-direction to yield nucleoside 5'-phosphates.. Its function is as follows. Bidirectionally degrades single-stranded DNA into large acid-insoluble oligonucleotides, which are then degraded further into small acid-soluble oligonucleotides. In Vibrio campbellii (strain ATCC BAA-1116), this protein is Exodeoxyribonuclease 7 small subunit.